The following is a 352-amino-acid chain: Endoplasmic reticulum GDP-fucose transporter (352 aa).

The next 10 membrane-spanning stretches (helical) occupy residues 9–29 (LGML…ELII), 34–54 (GAGN…GLVF), 70–90 (YVIL…AFNF), 96–116 (LHMI…IVLL), 126–146 (SSVA…SGDV), 163–183 (FFWW…TAYM), 201–221 (ALFF…GNIV), 249–271 (LMLF…VYVL), 276–298 (ASLT…SIIY), and 305–325 (LNHW…ANVI). Positions 350-352 (KVE) match the Prevents secretion from ER motif.

The protein belongs to the nucleotide-sugar transporter family. SLC35B subfamily.

It localises to the endoplasmic reticulum membrane. Sugar transporter that specifically mediates the transport of UDP-N-acetylglucosamine (UDP-GlcNAc), GDP-fucose and UDP-xylose. Functions redundantly with Gfr in the O-fucosylation of Notch, positively regulating Notch signaling. Involved in the biosynthesis of heparan sulfate-glycosaminoglycan (HS-GAG) and in Dpp signaling in the wing imaginal disk. This is Endoplasmic reticulum GDP-fucose transporter from Drosophila melanogaster (Fruit fly).